Here is a 738-residue protein sequence, read N- to C-terminus: Eukaryotic translation initiation factor 3 subunit B (738 aa).

Residues 1–120 (MCGCVGVISN…LFIQFKTAQM (120 aa)) form a sufficient for interaction with HCR1 and TIF32 region. Positions 1–245 (MCGCVGVISN…GIQSWGGAQF (245 aa)) are sufficient for interaction with PIC8. The RRM domain maps to 59–146 (NFVVVDGAPI…HRLLVNKLSD (88 aa)). WD repeat units lie at residues 211–250 (PRKG…SISK), 322–360 (QKEM…LLDK), 363–406 (VKID…QTAR), and 537–579 (VVDK…ENVR).

Belongs to the eIF-3 subunit B family. Component of the eukaryotic translation initiation factor 3 (eIF-3) complex.

Its subcellular location is the cytoplasm. Functionally, RNA-binding component of the eukaryotic translation initiation factor 3 (eIF-3) complex, which is involved in protein synthesis of a specialized repertoire of mRNAs and, together with other initiation factors, stimulates binding of mRNA and methionyl-tRNAi to the 40S ribosome. The eIF-3 complex specifically targets and initiates translation of a subset of mRNAs involved in cell proliferation. The polypeptide is Eukaryotic translation initiation factor 3 subunit B (Meyerozyma guilliermondii (strain ATCC 6260 / CBS 566 / DSM 6381 / JCM 1539 / NBRC 10279 / NRRL Y-324) (Yeast)).